Here is a 381-residue protein sequence, read N- to C-terminus: Cobalt-precorrin-5B C(1)-methyltransferase (381 aa).

Belongs to the CbiD family.

The enzyme catalyses Co-precorrin-5B + S-adenosyl-L-methionine = Co-precorrin-6A + S-adenosyl-L-homocysteine. It functions in the pathway cofactor biosynthesis; adenosylcobalamin biosynthesis; cob(II)yrinate a,c-diamide from sirohydrochlorin (anaerobic route): step 6/10. In terms of biological role, catalyzes the methylation of C-1 in cobalt-precorrin-5B to form cobalt-precorrin-6A. The sequence is that of Cobalt-precorrin-5B C(1)-methyltransferase from Methylococcus capsulatus (strain ATCC 33009 / NCIMB 11132 / Bath).